The primary structure comprises 287 residues: Elongation factor Ts (287 aa).

Residues 80–83 (TDFL) form an involved in Mg(2+) ion dislocation from EF-Tu region.

It belongs to the EF-Ts family.

It is found in the cytoplasm. Functionally, associates with the EF-Tu.GDP complex and induces the exchange of GDP to GTP. It remains bound to the aminoacyl-tRNA.EF-Tu.GTP complex up to the GTP hydrolysis stage on the ribosome. The protein is Elongation factor Ts of Pseudomonas savastanoi pv. phaseolicola (strain 1448A / Race 6) (Pseudomonas syringae pv. phaseolicola (strain 1448A / Race 6)).